Consider the following 339-residue polypeptide: Enhancer of mRNA-decapping protein 1 (339 aa).

Disordered stretches follow at residues 1–240 (MMMH…PPRY) and 309–339 (FPVNAQPPAHVGSAPQGQKISFDDLLGSAKK). Residues 13–25 (SPGSENHSNPASR) show a composition bias toward polar residues. Composition is skewed to basic and acidic residues over residues 26-38 (EQSKPKKETERRL) and 91-100 (DNKEKNKKLL). Over residues 111–131 (NFSFYSESNSNSNSNVSSNSN) the composition is skewed to low complexity. Residues 163–173 (RPDKNGKKGPV) show a composition bias toward basic and acidic residues. Over residues 196–212 (FQRTSPKQQANTINDEN) the composition is skewed to polar residues. Residues 213-237 (SSPSSSASSVSMSSPRPVAGAVAAP) show a composition bias toward low complexity.

It belongs to the EDC family.

The protein localises to the cytoplasm. MRNA-binding protein which stimulates mRNA decapping. This Scheffersomyces stipitis (strain ATCC 58785 / CBS 6054 / NBRC 10063 / NRRL Y-11545) (Yeast) protein is Enhancer of mRNA-decapping protein 1 (EDC1).